A 393-amino-acid polypeptide reads, in one-letter code: O-phospho-L-seryl-tRNA:Cys-tRNA synthase 1 (393 aa).

Pyridoxal 5'-phosphate contacts are provided by residues 85–86, Asn-190, and 213–215; these read AR and SGH. N6-(pyridoxal phosphate)lysine is present on Lys-216.

It belongs to the SepCysS family. As to quaternary structure, homodimer. Interacts with SepRS. Requires pyridoxal 5'-phosphate as cofactor.

The enzyme catalyses O-phospho-L-seryl-tRNA(Cys) + hydrogen sulfide + H(+) = L-cysteinyl-tRNA(Cys) + phosphate. In terms of biological role, converts O-phospho-L-seryl-tRNA(Cys) (Sep-tRNA(Cys)) to L-cysteinyl-tRNA(Cys) (Cys-tRNA(Cys)). This is O-phospho-L-seryl-tRNA:Cys-tRNA synthase 1 from Methanospirillum hungatei JF-1 (strain ATCC 27890 / DSM 864 / NBRC 100397 / JF-1).